The chain runs to 254 residues: Bowman-Birk type bran trypsin inhibitor (254 aa).

An N-terminal signal peptide occupies residues 1–22 (MSNTTMATSTILLFLLAGLAAA). A propeptide spanning residues 23–118 (HGDGDTTIRL…KCTAALDGLS (96 aa)) is cleaved from the precursor. 3 consecutive repeats follow at residues 46-120 (KPWD…LSME), 121-187 (RPWK…LCTP), and 188-251 (RPWG…CKPR). Disulfide bonds link Cys51–Cys248, Cys125–Cys185, Cys126–Cys143, Cys152–Cys159, Cys156–Cys172, Cys193–Cys248, Cys194–Cys209, Cys199–Cys207, Cys216–Cys223, and Cys220–Cys236. The propeptide occupies 252–254 (AEN).

This sequence belongs to the Bowman-Birk serine protease inhibitor family. As to expression, expressed in roots, leaves and flowers.

This chain is Bowman-Birk type bran trypsin inhibitor (RBBI3.3), found in Oryza sativa subsp. indica (Rice).